Reading from the N-terminus, the 1073-residue chain is Guanylyl cyclase C (1073 aa).

Residues 1-23 (MKTPLLALALWSLLLQLGLTFWP) form the signal peptide. Residues 24–433 (SSVSQNCHNG…IPGRGPQILM (410 aa)) lie on the Extracellular side of the membrane. N-linked (GlcNAc...) asparagine glycans are attached at residues N32, N43, N79, N195, N284, N307, and N402. Residues 434–454 (IAVFTLTGTIVLLLLIALLVL) form a helical membrane-spanning segment. Residues 455 to 1073 (RKYKREYALR…NTTDNESTHF (619 aa)) lie on the Cytoplasmic side of the membrane. The region spanning 489–749 (LKIDDDRRRD…KIENTLAKIF (261 aa)) is the Protein kinase domain. The 131-residue stretch at 824-954 (TIYFSDIVGF…DTVNTASRME (131 aa)) folds into the Guanylate cyclase domain.

It belongs to the adenylyl cyclase class-4/guanylyl cyclase family. As to quaternary structure, homotrimer. Interacts via its C-terminal region with NHERF4. Interacts with the lectin chaperone VIP36. Post-translationally, glycosylation at Asn-79 is required for interaction with VIP36 while glycosylation at Asn-402 modulates ligand-mediated GC-C activation.

Its subcellular location is the cell membrane. The protein localises to the endoplasmic reticulum membrane. The enzyme catalyses GTP = 3',5'-cyclic GMP + diphosphate. Guanylyl cyclase that catalyzes synthesis of cyclic GMP (cGMP) from GTP. The polypeptide is Guanylyl cyclase C (GUCY2C) (Sus scrofa (Pig)).